A 372-amino-acid chain; its full sequence is Glutamate 5-kinase (372 aa).

Lys14 is a binding site for ATP. Substrate contacts are provided by Ser54, Asp141, and Asn153. 173–174 contacts ATP; the sequence is TD. In terms of domain architecture, PUA spans 280–358; the sequence is RGTLVLDAGA…EAIESILGYS (79 aa).

This sequence belongs to the glutamate 5-kinase family.

The protein resides in the cytoplasm. The enzyme catalyses L-glutamate + ATP = L-glutamyl 5-phosphate + ADP. The protein operates within amino-acid biosynthesis; L-proline biosynthesis; L-glutamate 5-semialdehyde from L-glutamate: step 1/2. Catalyzes the transfer of a phosphate group to glutamate to form L-glutamate 5-phosphate. The protein is Glutamate 5-kinase of Pseudomonas putida (strain ATCC 700007 / DSM 6899 / JCM 31910 / BCRC 17059 / LMG 24140 / F1).